The chain runs to 193 residues: Potassium-transporting ATPase KdpC subunit (193 aa).

A helical membrane pass occupies residues 10 to 30; it reads AAIIIFSVLTGVIYPALVTVI.

This sequence belongs to the KdpC family. As to quaternary structure, the system is composed of three essential subunits: KdpA, KdpB and KdpC.

It localises to the cell membrane. In terms of biological role, part of the high-affinity ATP-driven potassium transport (or Kdp) system, which catalyzes the hydrolysis of ATP coupled with the electrogenic transport of potassium into the cytoplasm. This subunit acts as a catalytic chaperone that increases the ATP-binding affinity of the ATP-hydrolyzing subunit KdpB by the formation of a transient KdpB/KdpC/ATP ternary complex. This Herpetosiphon aurantiacus (strain ATCC 23779 / DSM 785 / 114-95) protein is Potassium-transporting ATPase KdpC subunit.